The following is a 224-amino-acid chain: MKAYKKEFINFMIECGVLTFGDFVTKSGRKTPFFVNTGNYQTGSQLRRLGEFYAEAIKENFADDYDVLFGPAYKGIPLSVTTSIALSSSFDIDVRYCSNRKEVKDHGDTGILLGSKLNDGDKVLIVEDVTTAGTSIYETMPILKSQADVNVKGLIISVDRMERGQGEQSALTEIREKFGFKTCAIVTMAEVIEYLYNKEINGTILITDEVKGRIDEYYKQYGAK.

Residues lysine 26, 73–74 (YK), arginine 100, lysine 101, lysine 104, histidine 106, and 127–135 (EDVTTAGTS) contribute to the 5-phospho-alpha-D-ribose 1-diphosphate site. Threonine 131 and arginine 160 together coordinate orotate.

Belongs to the purine/pyrimidine phosphoribosyltransferase family. PyrE subfamily. Homodimer. Mg(2+) serves as cofactor.

The enzyme catalyses orotidine 5'-phosphate + diphosphate = orotate + 5-phospho-alpha-D-ribose 1-diphosphate. It participates in pyrimidine metabolism; UMP biosynthesis via de novo pathway; UMP from orotate: step 1/2. Catalyzes the transfer of a ribosyl phosphate group from 5-phosphoribose 1-diphosphate to orotate, leading to the formation of orotidine monophosphate (OMP). This is Orotate phosphoribosyltransferase from Clostridium beijerinckii (strain ATCC 51743 / NCIMB 8052) (Clostridium acetobutylicum).